We begin with the raw amino-acid sequence, 253 residues long: 5'/3'-nucleotidase SurE (253 aa).

A divalent metal cation contacts are provided by D8, D9, S39, and N92.

The protein belongs to the SurE nucleotidase family. Requires a divalent metal cation as cofactor.

The protein localises to the cytoplasm. It catalyses the reaction a ribonucleoside 5'-phosphate + H2O = a ribonucleoside + phosphate. The enzyme catalyses a ribonucleoside 3'-phosphate + H2O = a ribonucleoside + phosphate. The catalysed reaction is [phosphate](n) + H2O = [phosphate](n-1) + phosphate + H(+). Its function is as follows. Nucleotidase with a broad substrate specificity as it can dephosphorylate various ribo- and deoxyribonucleoside 5'-monophosphates and ribonucleoside 3'-monophosphates with highest affinity to 3'-AMP. Also hydrolyzes polyphosphate (exopolyphosphatase activity) with the preference for short-chain-length substrates (P20-25). Might be involved in the regulation of dNTP and NTP pools, and in the turnover of 3'-mononucleotides produced by numerous intracellular RNases (T1, T2, and F) during the degradation of various RNAs. In Escherichia coli O127:H6 (strain E2348/69 / EPEC), this protein is 5'/3'-nucleotidase SurE.